Reading from the N-terminus, the 199-residue chain is dITP/XTP pyrophosphatase (199 aa).

8–13 (SGNAGK) contributes to the substrate binding site. The Proton acceptor role is filled by D69. Residue D69 participates in Mg(2+) binding. Substrate is bound by residues S70, 154–157 (FGYN), K177, and 182–183 (HR).

Belongs to the HAM1 NTPase family. In terms of assembly, homodimer. The cofactor is Mg(2+).

It carries out the reaction XTP + H2O = XMP + diphosphate + H(+). The enzyme catalyses dITP + H2O = dIMP + diphosphate + H(+). It catalyses the reaction ITP + H2O = IMP + diphosphate + H(+). In terms of biological role, pyrophosphatase that catalyzes the hydrolysis of nucleoside triphosphates to their monophosphate derivatives, with a high preference for the non-canonical purine nucleotides XTP (xanthosine triphosphate), dITP (deoxyinosine triphosphate) and ITP. Seems to function as a house-cleaning enzyme that removes non-canonical purine nucleotides from the nucleotide pool, thus preventing their incorporation into DNA/RNA and avoiding chromosomal lesions. In Xanthomonas campestris pv. campestris (strain 8004), this protein is dITP/XTP pyrophosphatase.